A 464-amino-acid polypeptide reads, in one-letter code: Protein FAM90A8 (464 aa).

Disordered regions lie at residues 1–42 (MMAR…DPRL), 69–389 (VPAT…HDGA), and 415–437 (HSPEKPGAFLAQSPHVSEKSEAP). Composition is skewed to basic and acidic residues over residues 74-89 (GKKEGKENLKPWKPRG) and 97-114 (NKDKGEKEERPRQQDPQR). Positions 180-197 (LASLSPLRKASLSSSSSL) are enriched in low complexity.

This sequence belongs to the FAM90 family.

This is Protein FAM90A8 (FAM90A8) from Homo sapiens (Human).